The following is a 1550-amino-acid chain: MCPPQLFILMMLLAPVVHGGKHNERHPALAAPLRHAEHSPGGPLPPRHLLQQPAAERSTAHRGQGPRGTARGVRGPGAPGAQIAAQAFSRAPIPMAVVRRELSCESYPIELRCPGTDVIMIESANYGRTDDKICDSDPAQMENIRCYLPDAYKIMSQRCNNRTQCAVVAGPDVFPDPCPGTYKYLEVQYECVPYKVEQKVFLCPGLLKGVYQSEHLFESDHQSGAWCKDPLQASDKIYYMPWTPYRTDTLTEYSSKDDFIAGRPTTTYKLPHRVDGTGFVVYDGALFFNKERTRNIVKFDLRTRIKSGEAIIANANYHDTSPYRWGGKSDIDLAVDENGLWVIYATEQNNGKIVISQLNPYTLRIEGTWDTAYDKRSASNAFMICGILYVVKSVYEDDDNEATGNKIDYIYNTDQSKDSLVDVPFPNSYQYIAAVDYNPRDNLLYVWNNYHVVKYSLDFGPLDSRSGPVHHGQVSYISPPIHLDSDLERPPVRGISTTGPLGMGSTTTSTTLRTTTWNLGRSTTPSLPGRRNRSTSTPSPAIEVLDVTTHLPSAASQIPAMEESCEAVEAREIMWFKTRQGQVAKQSCPAGTIGVSTYLCLAPDGIWDPQGPDLSNCSSPWVNHITQKLKSGETAANIARELAEQTRNHLNAGDITYSVRAMDQLVGLLDVQLRNLTPGGKDSAARSLNKLQKRERSCRAYVQAMVETVNNLLQPQALNAWRDLTTSDQLRAATMLLDTVEESAFVLADNLLKTDIVRENTDNIQLEVARLSTEGNLEDLKFPENTGHGSTIQLSANTLKQNGRNGEIRVAFVLYNNLGPYLSTENASMKLGTEAMSTNHSVIVNSPVITAAINKEFSNKVYLADPVVFTVKHIKQSEENFNPNCSFWSYSKRTMTGYWSTQGCRLLTTNKTHTTCSCNHLTNFAVLMAHVEVKHSDAVHDLLLDVITWVGILLSLVCLLICIFTFCFFRGLQSDRNTIHKNLCISLFVAELLFLIGINRTDQPIACAVFAALLHFFFLAAFTWMFLEGVQLYIMLVEVFESEHSRRKYFYLVGYGMPALIVAVSAAVDYRSYGTDKVCWLRLDTYFIWSFIGPATLIIMLNVIFLGIALYKMFHHTAILKPESGCLDNINYEDNRPFIKSWVIGAIALLCLLGLTWAFGLMYINESTVIMAYLFTIFNSLQGMFIFIFHCVLQKKVRKEYGKCLRTHCCSGKSTESSIGSGKTSGSRTPGRYSTGSQSRIRRMWNDTVRKQSESSFITGDINSSASLNRGSYLPCIQACVTYLEGLLNNARDTSVMDTLPLNGNHGNSYSIAGGEYLSNCVQIIDRGYNHNETALEKKILKELTSNYIPSYLNNHERSSEQNRNMMNKLVDNLGSGSEDDAIVLDDAASFNHEESLGLELIHEESDAPLLPPRVYSTDNHQPHHYSRRRLPQDHSESFFPLLTDEHTEDPQSPHRDSLYTSMPALAGVPAADSVTTSTQTEAAAAKGGDAEDVYYKSMPNLGSRNHVHPLHAYYQLGRGSSDGFIVPPNKDGASPEGTSKGPAHLVTSL.

The signal sequence occupies residues 1–19; sequence MCPPQLFILMMLLAPVVHG. Topologically, residues 20-948 are extracellular; that stretch reads GKHNERHPAL…VHDLLLDVIT (929 aa). Residues 34 to 80 are disordered; that stretch reads RHAEHSPGGPLPPRHLLQQPAAERSTAHRGQGPRGTARGVRGPGAPG. One can recognise an SUEL-type lectin domain in the interval 103 to 192; sequence SCESYPIELR…KYLEVQYECV (90 aa). Intrachain disulfides connect C104/C134, C113/C191, C146/C178, C159/C165, and C203/C385. The N-linked (GlcNAc...) asparagine glycan is linked to N161. The Olfactomedin-like domain maps to 202 to 461; that stretch reads LCPGLLKGVY…VVKYSLDFGP (260 aa). Residues 317–347 form an interaction with FLRT3 region; the sequence is YHDTSPYRWGGKSDIDLAVDENGLWVIYATE. Ca(2+)-binding residues include D332, N380, A381, and V435. Residues 518 to 538 are disordered; sequence NLGRSTTPSLPGRRNRSTSTP. N-linked (GlcNAc...) asparagine glycans are attached at residues N532, N616, N839, N884, and N910. In terms of domain architecture, GAIN-B spans 755–934; that stretch reads DIVRENTDNI…AVLMAHVEVK (180 aa). Disulfide bonds link C885/C916 and C904/C918. The segment at 885–934 is GPS; the sequence is CSFWSYSKRTMTGYWSTQGCRLLTTNKTHTTCSCNHLTNFAVLMAHVEVK. Residues 922-938 form a stachel region; sequence TNFAVLMAHVEVKHSDA. A helical transmembrane segment spans residues 949 to 969; sequence WVGILLSLVCLLICIFTFCFF. The Cytoplasmic segment spans residues 970 to 977; sequence RGLQSDRN. A helical membrane pass occupies residues 978-998; the sequence is TIHKNLCISLFVAELLFLIGI. The N-linked (GlcNAc...) asparagine glycan is linked to N999. Residues 999 to 1006 lie on the Extracellular side of the membrane; the sequence is NRTDQPIA. A helical membrane pass occupies residues 1007 to 1027; sequence CAVFAALLHFFFLAAFTWMFL. Residues 1028–1048 lie on the Cytoplasmic side of the membrane; that stretch reads EGVQLYIMLVEVFESEHSRRK. Residues 1049–1069 form a helical membrane-spanning segment; it reads YFYLVGYGMPALIVAVSAAVD. Residues 1070–1087 are Extracellular-facing; it reads YRSYGTDKVCWLRLDTYF. The chain crosses the membrane as a helical span at residues 1088–1108; it reads IWSFIGPATLIIMLNVIFLGI. The Cytoplasmic portion of the chain corresponds to 1109–1141; the sequence is ALYKMFHHTAILKPESGCLDNINYEDNRPFIKS. A helical transmembrane segment spans residues 1142-1162; the sequence is WVIGAIALLCLLGLTWAFGLM. Topologically, residues 1163-1168 are extracellular; it reads YINEST. Residue N1165 is glycosylated (N-linked (GlcNAc...) asparagine). A helical transmembrane segment spans residues 1169-1189; the sequence is VIMAYLFTIFNSLQGMFIFIF. The Cytoplasmic segment spans residues 1190–1550; that stretch reads HCVLQKKVRK…KGPAHLVTSL (361 aa). Residues 1213–1236 are disordered; sequence KSTESSIGSGKTSGSRTPGRYSTG. Position 1253 is a phosphoserine (S1253). 2 disordered regions span residues 1410 to 1435 and 1528 to 1550; these read LLPPRVYSTDNHQPHHYSRRRLPQDH and PPNKDGASPEGTSKGPAHLVTSL. Residue S1535 is modified to Phosphoserine. Positions 1545–1550 match the PDZ-binding motif; sequence HLVTSL.

This sequence belongs to the G-protein coupled receptor 2 family. LN-TM7 subfamily. In terms of assembly, heterodimer of 2 chains generated by proteolytic processing; the large extracellular N-terminal fragment and the membrane-bound C-terminal fragment predominantly remain associated and non-covalently linked. Interacts (via olfactomedin-like domain) with FLRT1 (via extracellular domain). Interacts (via olfactomedin-like domain) with FLRT2 (via extracellular domain). Interacts (via olfactomedin-like domain) with FLRT3 (via extracellular domain); the interaction is direct. Interacts (via extracellular domain) with TENM1. Interacts (via extracellular domain) with TENM2. Interacts (via extracellular domain) with TENM3. Identified in a complex with FLRT3 and UNC5B; does not interact with UNC5B by itself. Identified in a complex with FLRT3 and UNC5D; does not interact with UNC5D by itself. Interacts (via PDZ-binding motif) with SHANK3. Interacts (via PDZ-binding motif) with DLG4. In terms of processing, autoproteolytically processed at the GPS region of the GAIN-B domain; this cleavage modulates receptor activity. Predominantly expressed in brain, followed by heart, placenta, pancreas, kidney and testis.

It is found in the cell membrane. The protein localises to the postsynaptic cell membrane. Its subcellular location is the cell projection. It localises to the axon. The protein resides in the cell junction. Its activity is regulated as follows. Forms a heterodimer of 2 chains generated by proteolytic processing that remain associated through non-covalent interactions mediated by the GAIN-B domain. In the inactivated receptor, the Stachel sequence (also named stalk) is embedded in the GAIN-B domain, where it adopts a beta-strand conformation. On activation, the Stachel moves into the 7 transmembrane region and adopts a twisted hook-shaped configuration that forms contacts within the receptor, leading to coupling of a G-alpha protein, which activates signaling. The cleaved GAIN-B and N-terminal domains can then dissociate from the rest of the receptor. In terms of biological role, orphan adhesion G-protein coupled receptor (aGPCR), which mediates synapse specificity. Ligand binding causes a conformation change that triggers signaling via guanine nucleotide-binding proteins (G proteins) and modulates the activity of downstream effectors. ADGRL3 is coupled with different classes of G alpha proteins, such as G(12)/G(13), G(s), G(i) or G(q), depending on the context. Coupling to G(12)/G(13) G proteins, which mediates the activation Rho small GTPases is the most efficient. Following G-protein coupled receptor activation, associates with cell adhesion molecules that are expressed at the surface of adjacent cells to direct synapse specificity. Specifically mediates the establishment of Schaffer-collateral synapses formed by CA3-region axons on CA1-region pyramidal neurons in the hippocampus. Localizes to postsynaptic spines in excitatory synapses in the S.oriens and S.radiatum and interacts with presynaptic cell adhesion molecules FLRT3 and TENM2, promoting synapse formation. Plays a role in the development of glutamatergic synapses in the cortex. Important in determining the connectivity rates between the principal neurons in the cortex. Orphan adhesion G-protein coupled receptor (aGPCR), which mediates synapse specificity. Ligand binding causes a conformation change that triggers signaling via guanine nucleotide-binding proteins (G proteins) and modulates the activity of downstream effectors, such as adenylate cyclase. Isoform 1 is specifically coupled to G(s) G proteins and mediates activation of adenylate cyclase activity. Following G-protein coupled receptor activation, undergoes liquid-liquid phase transition, associates with (1) cell adhesion molecules that are expressed at the surface of adjacent cells, as well as (2) PDZ-containing proteins, such as SHANK3 and DLG4, in the cytoplasm to direct synapse formation. This Rattus norvegicus (Rat) protein is Adhesion G protein-coupled receptor L3.